The following is a 62-amino-acid chain: Large ribosomal subunit protein uL30 (62 aa).

This sequence belongs to the universal ribosomal protein uL30 family. Part of the 50S ribosomal subunit.

This is Large ribosomal subunit protein uL30 from Kosmotoga olearia (strain ATCC BAA-1733 / DSM 21960 / TBF 19.5.1).